Here is a 206-residue protein sequence, read N- to C-terminus: Thiamine-phosphate synthase (206 aa).

4-amino-2-methyl-5-(diphosphooxymethyl)pyrimidine-binding positions include 38–42 and Asn-70; that span reads QLRAK. Mg(2+)-binding residues include Asp-71 and Asp-90. Ser-107 lines the 4-amino-2-methyl-5-(diphosphooxymethyl)pyrimidine pocket. Residue 133 to 135 coordinates 2-[(2R,5Z)-2-carboxy-4-methylthiazol-5(2H)-ylidene]ethyl phosphate; sequence TTT. Lys-136 contacts 4-amino-2-methyl-5-(diphosphooxymethyl)pyrimidine. 2-[(2R,5Z)-2-carboxy-4-methylthiazol-5(2H)-ylidene]ethyl phosphate contacts are provided by residues Gly-164 and 184–185; that span reads VS.

The protein belongs to the thiamine-phosphate synthase family. Mg(2+) serves as cofactor.

The catalysed reaction is 2-[(2R,5Z)-2-carboxy-4-methylthiazol-5(2H)-ylidene]ethyl phosphate + 4-amino-2-methyl-5-(diphosphooxymethyl)pyrimidine + 2 H(+) = thiamine phosphate + CO2 + diphosphate. It carries out the reaction 2-(2-carboxy-4-methylthiazol-5-yl)ethyl phosphate + 4-amino-2-methyl-5-(diphosphooxymethyl)pyrimidine + 2 H(+) = thiamine phosphate + CO2 + diphosphate. The enzyme catalyses 4-methyl-5-(2-phosphooxyethyl)-thiazole + 4-amino-2-methyl-5-(diphosphooxymethyl)pyrimidine + H(+) = thiamine phosphate + diphosphate. It participates in cofactor biosynthesis; thiamine diphosphate biosynthesis; thiamine phosphate from 4-amino-2-methyl-5-diphosphomethylpyrimidine and 4-methyl-5-(2-phosphoethyl)-thiazole: step 1/1. Functionally, condenses 4-methyl-5-(beta-hydroxyethyl)thiazole monophosphate (THZ-P) and 2-methyl-4-amino-5-hydroxymethyl pyrimidine pyrophosphate (HMP-PP) to form thiamine monophosphate (TMP). The protein is Thiamine-phosphate synthase of Herpetosiphon aurantiacus (strain ATCC 23779 / DSM 785 / 114-95).